We begin with the raw amino-acid sequence, 779 residues long: Pleckstrin homology domain-containing family A member 4 (779 aa).

In terms of domain architecture, PH spans 54–153 (PVHIRGWLHK…WLRALGRASR (100 aa)). 3 disordered regions span residues 152-352 (SRAE…LPGP), 492-670 (AGLG…EGHR), and 691-764 (MTGG…LPQD). Ser164 is modified (phosphoserine). Over residues 184–193 (SRGEEGRISE) the composition is skewed to basic and acidic residues. Polar residues predominate over residues 315–332 (QHWSQEPRTQAHSGSPTY). Low complexity predominate over residues 525–535 (PESLELSSPRS). A compositionally biased stretch (basic and acidic residues) spans 536–551 (PETDWGRPPGGDKDLA). Ser559 bears the Phosphoserine mark. A compositionally biased stretch (basic and acidic residues) spans 594-603 (QLERMRRNQE). Residues 647–663 (LRSSGSWSSPRNTTPYL) are compositionally biased toward polar residues. The span at 704–724 (PGVPLPPSDPTRQETPPPRSP) shows a compositional bias: pro residues.

In terms of tissue distribution, highly expressed in melanoma. Detected at low levels in heart, skeletal muscle, kidney, liver and small intestine.

The protein localises to the cytoplasm. It is found in the membrane. In terms of biological role, binds specifically to phosphatidylinositol 3-phosphate (PtdIns3P), but not to other phosphoinositides. This Homo sapiens (Human) protein is Pleckstrin homology domain-containing family A member 4 (PLEKHA4).